Here is a 421-residue protein sequence, read N- to C-terminus: UDP-N-acetylglucosamine 1-carboxyvinyltransferase (421 aa).

22-23 (KN) contributes to the phosphoenolpyruvate binding site. R92 contacts UDP-N-acetyl-alpha-D-glucosamine. C116 serves as the catalytic Proton donor. At C116 the chain carries 2-(S-cysteinyl)pyruvic acid O-phosphothioketal. Residues 121–125 (RPVDQ), D308, and I330 each bind UDP-N-acetyl-alpha-D-glucosamine.

This sequence belongs to the EPSP synthase family. MurA subfamily.

It is found in the cytoplasm. It carries out the reaction phosphoenolpyruvate + UDP-N-acetyl-alpha-D-glucosamine = UDP-N-acetyl-3-O-(1-carboxyvinyl)-alpha-D-glucosamine + phosphate. Its pathway is cell wall biogenesis; peptidoglycan biosynthesis. Functionally, cell wall formation. Adds enolpyruvyl to UDP-N-acetylglucosamine. The protein is UDP-N-acetylglucosamine 1-carboxyvinyltransferase of Ralstonia nicotianae (strain ATCC BAA-1114 / GMI1000) (Ralstonia solanacearum).